A 61-amino-acid chain; its full sequence is MKKLKITLVRSPIGYKYDQKDTVKRLGLRRMHYTVIKEDTPQIRGMVEKVKHLVKVEEVEE.

Belongs to the universal ribosomal protein uL30 family. As to quaternary structure, part of the 50S ribosomal subunit.

This is Large ribosomal subunit protein uL30 from Fervidobacterium nodosum (strain ATCC 35602 / DSM 5306 / Rt17-B1).